The primary structure comprises 655 residues: p-hydroxybenzoic acid efflux pump subunit AaeB (655 aa).

The Periplasmic portion of the chain corresponds to 1 to 12 (MGIFSIANQHIR). A helical membrane pass occupies residues 13–33 (FAVKLACAIVLALFIGFHFQL). Residues 34-37 (ETPR) lie on the Cytoplasmic side of the membrane. The helical transmembrane segment at 38 to 58 (WAVLTAAIVAAGPAFAAGGEP) threads the bilayer. The Periplasmic segment spans residues 59–68 (YSGAIRYRGM). Residues 69–89 (LRIIGTFIGCIAALIIIISMI) traverse the membrane as a helical segment. The Cytoplasmic portion of the chain corresponds to 90–92 (RAP). The helical transmembrane segment at 93–113 (LLMILVCCVWVGFCTWISSLV) threads the bilayer. Topologically, residues 114–120 (RIENSYA) are periplasmic. The helical transmembrane segment at 121 to 141 (WGLSGYTALIIVITIQTEPLL) threads the bilayer. Residues 142–151 (TPQFALERCS) are Cytoplasmic-facing. Residues 152–172 (EIVIGIGCAILADLLFSPRSI) form a helical membrane-spanning segment. The Periplasmic portion of the chain corresponds to 173–369 (KQEVDRELDS…RTTLSCILGT (197 aa)). A helical membrane pass occupies residues 370–390 (LFWLWTGWTSGNGEMVMIAVV). Residues 391-406 (TSLAMRLPNPRMVCID) are Cytoplasmic-facing. A helical membrane pass occupies residues 407 to 427 (FIYGTLAALPLGLLYFLVIIP). Residues 428-430 (NTQ) lie on the Periplasmic side of the membrane. The chain crosses the membrane as a helical span at residues 431–451 (QSMLLLCLSLAVLGFFIGIEV). Over 452–458 (QKRRLGS) the chain is Cytoplasmic. A helical membrane pass occupies residues 459–479 (MGALASTINIIVLDNPMTFHF). Residues 480 to 481 (SQ) are Periplasmic-facing. The helical transmembrane segment at 482–502 (FLDSALGQIVGCMLAFIVILL) threads the bilayer. The Cytoplasmic segment spans residues 503–655 (VRDKSKDRTG…HKYQNALTDS (153 aa)).

This sequence belongs to the aromatic acid exporter ArAE (TC 2.A.85) family.

It localises to the cell inner membrane. Its function is as follows. Forms an efflux pump with AaeA. Could function as a metabolic relief valve, allowing to eliminate certain compounds when they accumulate to high levels in the cell. This is p-hydroxybenzoic acid efflux pump subunit AaeB from Salmonella paratyphi A (strain ATCC 9150 / SARB42).